We begin with the raw amino-acid sequence, 1058 residues long: Kinesin-like protein KIN-7M, chloroplastic (1058 aa).

The transit peptide at 1–60 (MASSSSRTRSRSPFSHRRPPSPYSSASSTSSSLINNRLLPRSSSTPTSTVYNSGGVTGSR) directs the protein to the chloroplast. The disordered stretch occupies residues 1-92 (MASSSSRTRS…QSYPSEGLIG (92 aa)). Basic residues predominate over residues 8–19 (TRSRSPFSHRRP). The segment covering 23-49 (YSSASSTSSSLINNRLLPRSSSTPTST) has biased composition (low complexity). A compositionally biased stretch (polar residues) spans 50–70 (VYNSGGVTGSRSMSITRTISD). The region spanning 104–421 (SISVTVRFRP…LKFASRAKRI (318 aa)) is the Kinesin motor domain. 184-191 (GVTSSGKT) serves as a coordination point for ATP. A coiled-coil region spans residues 422-509 (EINASRNKII…QKLTKLILVS (88 aa)). The segment at 549–578 (PSSTLSLASDARRSSSKFKDENSPVGSRAE) is disordered. A compositionally biased stretch (basic and acidic residues) spans 558 to 570 (DARRSSSKFKDEN). Coiled coils occupy residues 621–658 (PENS…ASIA), 704–826 (NNEL…AQKR), 873–904 (LEAA…LEND), and 935–999 (KEDE…SQAA). Positions 824–838 (QKRNNNSMNSAANRN) are enriched in low complexity. Positions 824 to 847 (QKRNNNSMNSAANRNGTRPGRKAR) are disordered. The tract at residues 922–946 (ALSIQKSDEAEPAKEDEVTELDNKN) is disordered. Positions 927 to 946 (KSDEAEPAKEDEVTELDNKN) are enriched in basic and acidic residues. The RING-type zinc-finger motif lies at 1011–1046 (CKVCFESPTATILLPCRHFCLCKSCSLACSECPICR).

The protein belongs to the TRAFAC class myosin-kinesin ATPase superfamily. Kinesin family. KIN-7 subfamily.

The protein localises to the plastid. It is found in the chloroplast. The chain is Kinesin-like protein KIN-7M, chloroplastic from Arabidopsis thaliana (Mouse-ear cress).